The chain runs to 271 residues: Putative phosphoenolpyruvate synthase regulatory protein (271 aa).

Position 151–158 (151–158 (GVSRSGKT)) interacts with ADP.

Belongs to the pyruvate, phosphate/water dikinase regulatory protein family. PSRP subfamily.

It catalyses the reaction [pyruvate, water dikinase] + ADP = [pyruvate, water dikinase]-phosphate + AMP + H(+). The catalysed reaction is [pyruvate, water dikinase]-phosphate + phosphate + H(+) = [pyruvate, water dikinase] + diphosphate. Functionally, bifunctional serine/threonine kinase and phosphorylase involved in the regulation of the phosphoenolpyruvate synthase (PEPS) by catalyzing its phosphorylation/dephosphorylation. This chain is Putative phosphoenolpyruvate synthase regulatory protein, found in Burkholderia thailandensis (strain ATCC 700388 / DSM 13276 / CCUG 48851 / CIP 106301 / E264).